The chain runs to 427 residues: Trigger factor (427 aa).

The 86-residue stretch at 163-248 (GDTVVIDFVG…IHEVKAKEVP (86 aa)) folds into the PPIase FKBP-type domain.

It belongs to the FKBP-type PPIase family. Tig subfamily.

Its subcellular location is the cytoplasm. It catalyses the reaction [protein]-peptidylproline (omega=180) = [protein]-peptidylproline (omega=0). Involved in protein export. Acts as a chaperone by maintaining the newly synthesized protein in an open conformation. Functions as a peptidyl-prolyl cis-trans isomerase. This chain is Trigger factor, found in Streptococcus suis (strain 05ZYH33).